Consider the following 385-residue polypeptide: GDSL esterase/lipase At5g08460 (385 aa).

The N-terminal stretch at 1–35 (MHDSEIFKFKDMMMMSCTVQTLVLVPWFLVVFVLA) is a signal peptide. The active-site Nucleophile is the serine 56. Asparagine 218 and asparagine 285 each carry an N-linked (GlcNAc...) asparagine glycan. Residues aspartate 350 and histidine 353 contribute to the active site. N-linked (GlcNAc...) asparagine glycans are attached at residues asparagine 368 and asparagine 378.

It belongs to the 'GDSL' lipolytic enzyme family.

The protein resides in the secreted. The sequence is that of GDSL esterase/lipase At5g08460 from Arabidopsis thaliana (Mouse-ear cress).